The following is a 497-amino-acid chain: 5'-AMP-activated protein kinase subunit gamma-3 (497 aa).

Positions 16–143 are disordered; it reads STQTPSWSSF…SSSSTDDLDQ (128 aa). The segment covering 39 to 54 has biased composition (polar residues); the sequence is GDSTSWPSPAMTTSAE. Residues 68–79 are compositionally biased toward basic and acidic residues; that stretch reads KSQEDVEERELP. CBS domains follow at residues 204-265, 287-345, and 363-423; these read MATS…RSPL, CFKP…QRTL, and TFRD…HLDI. ADP is bound by residues Arg-232, 247–252, Val-292, 313–314, and Lys-332; these read MLTITD and HR. AMP contacts are provided by residues Arg-232, 247-252, Val-292, His-313, 313-314, Lys-332, Thr-363, Ala-368, 389-390, 405-408, Arg-432, Leu-440, His-461, 461-462, and 477-480; these read MLTITD, HR, SA, SRFD, and SLSD. Residues Arg-232, 247–252, Val-292, 313–314, Arg-314, and Lys-332 each bind ATP; these read MLTITD and HR. The AMPK pseudosubstrate motif lies at 300–321; sequence LFEAVYTLIKNRIHRLPVLDPV. ADP-binding positions include 405 to 408, Arg-432, Leu-440, and 461 to 462; these read SRFD and HR. Residues 405–408, Arg-432, Leu-440, and 461–462 each bind ATP; these read SRFD and HR. Positions 435–494 constitute a CBS 4 domain; it reads CLEGVLSCQPHETLGEVIDRIAREQVHRLVLVDETQHLLGVVSLSDILQALVLSPAGIDA.

It belongs to the 5'-AMP-activated protein kinase gamma subunit family. In terms of assembly, AMPK is a heterotrimer of an alpha catalytic subunit (PRKAA1 or PRKAA2), a beta (PRKAB1 or PRKAB2) and a gamma non-catalytic subunits (PRKAG1, PRKAG2 or PRKAG3). Interacts with FNIP1 and FNIP2. Post-translationally, phosphorylated by ULK1; leading to negatively regulate AMPK activity and suggesting the existence of a regulatory feedback loop between ULK1 and AMPK. Glycosylated; O-GlcNAcylated by OGT, promoting the AMP-activated protein kinase (AMPK) activity.

In terms of biological role, AMP/ATP-binding subunit of AMP-activated protein kinase (AMPK), an energy sensor protein kinase that plays a key role in regulating cellular energy metabolism. In response to reduction of intracellular ATP levels, AMPK activates energy-producing pathways and inhibits energy-consuming processes: inhibits protein, carbohydrate and lipid biosynthesis, as well as cell growth and proliferation. AMPK acts via direct phosphorylation of metabolic enzymes, and by longer-term effects via phosphorylation of transcription regulators. AMPK also acts as a regulator of cellular polarity by remodeling the actin cytoskeleton; probably by indirectly activating myosin. The AMPK gamma3 subunit is a non-catalytic subunit with a regulatory role in muscle energy metabolism. It mediates binding to AMP, ADP and ATP, leading to AMPK activation or inhibition: AMP-binding results in allosteric activation of alpha catalytic subunit (PRKAA1 or PRKAA2) both by inducing phosphorylation and preventing dephosphorylation of catalytic subunits. ADP also stimulates phosphorylation, without stimulating already phosphorylated catalytic subunit. ATP promotes dephosphorylation of catalytic subunit, rendering the AMPK enzyme inactive. This chain is 5'-AMP-activated protein kinase subunit gamma-3 (PRKAG3), found in Bos taurus (Bovine).